The following is a 315-amino-acid chain: Ribonuclease Z (315 aa).

Residues histidine 62, histidine 64, aspartate 66, histidine 67, histidine 144, aspartate 215, and histidine 273 each coordinate Zn(2+). The active-site Proton acceptor is aspartate 66.

It belongs to the RNase Z family. Homodimer. The cofactor is Zn(2+).

The enzyme catalyses Endonucleolytic cleavage of RNA, removing extra 3' nucleotides from tRNA precursor, generating 3' termini of tRNAs. A 3'-hydroxy group is left at the tRNA terminus and a 5'-phosphoryl group is left at the trailer molecule.. Functionally, zinc phosphodiesterase, which displays some tRNA 3'-processing endonuclease activity. Probably involved in tRNA maturation, by removing a 3'-trailer from precursor tRNA. The protein is Ribonuclease Z of Synechococcus sp. (strain CC9311).